We begin with the raw amino-acid sequence, 490 residues long: Tegument protein VP16 (490 aa).

The disordered stretch occupies residues 12–37; that stretch reads MDADGASPPPPRPAGGPKNTPAAPPL. 4 positions are modified to phosphoserine: Ser18, Ser353, Ser411, and Ser452. Residues 411–490 are transcriptional activation; the sequence is STAPPTDVSL…DALGIDEYGG (80 aa).

This sequence belongs to the herpesviridae tegument protein VP16 protein family. In terms of assembly, interacts with VP22. Interacts with gH (via C-terminus). Interacts with the virion host shutoff protein (vhs). Interacts with VP11/12. Associates with the VP16-induced complex; binding to host HCFC1 activates VP16 for association with the octamer motif-binding host protein POU2F1, to form a multiprotein-DNA complex responsible for activating transcription of the viral immediate early genes.

It is found in the virion tegument. The protein localises to the host nucleus. Transcriptional activator of immediate-early (IE) gene products (alpha genes). Acts as a key activator of lytic infection by initiating the lytic program through the assembly of the transcriptional regulatory VP16-induced complex composed of VP16 and two cellular factors, HCFC1 and POU2F 1. VP16-induced complex represents a regulatory switch: when it is on, it promotes IE-gene expression and thus lytic infection, and when it is off, it limits IE-gene transcription favoring latent infection. In terms of biological role, may play a role in the aggregation of tegument proteins around nucleocapsids during virus morphogenesis. The chain is Tegument protein VP16 from Homo sapiens (Human).